Reading from the N-terminus, the 462-residue chain is Protein ultraspiracle homolog (462 aa).

The tract at residues 1-113 is modulating; it reads MSSVAKKDKR…NHPLSGSKHL (113 aa). 2 NR C4-type zinc fingers span residues 114–134 and 150–174; these read CSICGDRASGKHYGVYSCEGC and CREDKNCIIDKRQRNRCQYCRYQKC. The nuclear receptor DNA-binding region spans 114 to 179; the sequence is CSICGDRASG…RYQKCLACGM (66 aa). Positions 180–201 are hinge; it reads KREAVQEERQRAARRTEDAHPS. Residues 204–453 form the NR LBD domain; that stretch reads VQELSIERLL…SYIRDALCNH (250 aa).

This sequence belongs to the nuclear hormone receptor family. NR2 subfamily. In terms of assembly, heterodimer of USP and ECR. As to expression, abundant expression seen in males and ovaries.

The protein localises to the nucleus. The sequence is that of Protein ultraspiracle homolog (USP) from Bombyx mori (Silk moth).